The following is a 409-amino-acid chain: Pentatricopeptide repeat-containing protein At5g09450, mitochondrial (409 aa).

The N-terminal 38 residues, 1–38 (MATRSLFHSLRCRLTNNGVLGSNFIRNAESSRFSKSYN), are a transit peptide targeting the mitochondrion. PPR repeat units lie at residues 155 to 189 (TAETYTSLLHAYAASKQTERAEALFKRIIESDSLT), 191 to 225 (GAITYNEMMTLYMSVGQVEKVPEVIEVLKQKKVSP), 226 to 256 (DIFTYNLWLSSCAATFNIDELRKILEEMRHD), 262 to 296 (GWVRYIDLTSIYINSSRVTNAESTLPVEAEKSISQ), 298 to 332 (EWITYDFLMILHTGLGNKVMIDQIWKSLRNTNQIL), and 333 to 367 (SSRSYICVLSSYLMLGHLREAEEIIHQWKESKTTE).

This sequence belongs to the PPR family. P subfamily.

The protein resides in the mitochondrion. The sequence is that of Pentatricopeptide repeat-containing protein At5g09450, mitochondrial from Arabidopsis thaliana (Mouse-ear cress).